Here is a 260-residue protein sequence, read N- to C-terminus: Taurine import ATP-binding protein TauB (260 aa).

The region spanning 6–235 is the ABC transporter domain; sequence AQQVSVVYAS…RYAHGEPVRS (230 aa). Position 40–47 (40–47) interacts with ATP; the sequence is GASGCGKS.

This sequence belongs to the ABC transporter superfamily. Taurine importer (TC 3.A.1.17.1) family. The complex is composed of two ATP-binding proteins (TauB), two transmembrane proteins (TauC) and a solute-binding protein (TauA).

Its subcellular location is the cell inner membrane. It carries out the reaction taurine(out) + ATP + H2O = taurine(in) + ADP + phosphate + H(+). Part of the ABC transporter complex TauABC involved in taurine import. Responsible for energy coupling to the transport system. This is Taurine import ATP-binding protein TauB from Burkholderia pseudomallei (strain K96243).